A 149-amino-acid polypeptide reads, in one-letter code: Large ribosomal subunit protein bL9 (149 aa).

It belongs to the bacterial ribosomal protein bL9 family.

Binds to the 23S rRNA. The chain is Large ribosomal subunit protein bL9 from Salmonella agona (strain SL483).